The following is a 368-amino-acid chain: 3-dehydroquinate synthase (368 aa).

This sequence belongs to the archaeal-type DHQ synthase family.

The catalysed reaction is 2-amino-2,3,7-trideoxy-D-lyxo-hept-6-ulosonate + NAD(+) + H2O = 3-dehydroquinate + NH4(+) + NADH + H(+). Catalyzes the oxidative deamination and cyclization of 2-amino-3,7-dideoxy-D-threo-hept-6-ulosonic acid (ADH) to yield 3-dehydroquinate (DHQ), which is fed into the canonical shikimic pathway of aromatic amino acid biosynthesis. The polypeptide is 3-dehydroquinate synthase (Methanobrevibacter smithii (strain ATCC 35061 / DSM 861 / OCM 144 / PS)).